A 299-amino-acid chain; its full sequence is Probable lipid kinase YegS (299 aa).

The region spanning 2–133 (AEFPASLLIL…IDMAQVNKQT (132 aa)) is the DAGKc domain. ATP is bound by residues threonine 40, 66–72 (GDGTINE), and threonine 95. Mg(2+) contacts are provided by leucine 215, aspartate 218, and leucine 220. Catalysis depends on glutamate 271, which acts as the Proton acceptor.

The protein belongs to the diacylglycerol/lipid kinase family. YegS lipid kinase subfamily. Mg(2+) is required as a cofactor. It depends on Ca(2+) as a cofactor.

The protein resides in the cytoplasm. Its function is as follows. Probably phosphorylates lipids; the in vivo substrate is unknown. The protein is Probable lipid kinase YegS of Escherichia coli (strain 55989 / EAEC).